Reading from the N-terminus, the 391-residue chain is Argininosuccinate synthase (391 aa).

An ATP-binding site is contributed by 6 to 14 (AYSGGLDTT). Position 84 (Tyr84) interacts with L-citrulline. Position 114 (Gly114) interacts with ATP. Residues Thr116, Asn120, and Asp121 each coordinate L-aspartate. Asn120 contacts L-citrulline. Residues Arg124, Ser171, Ser180, Glu253, and Tyr265 each contribute to the L-citrulline site.

This sequence belongs to the argininosuccinate synthase family. Type 1 subfamily. Homotetramer.

The protein localises to the cytoplasm. It carries out the reaction L-citrulline + L-aspartate + ATP = 2-(N(omega)-L-arginino)succinate + AMP + diphosphate + H(+). It functions in the pathway amino-acid biosynthesis; L-arginine biosynthesis; L-arginine from L-ornithine and carbamoyl phosphate: step 2/3. This chain is Argininosuccinate synthase, found in Sulfolobus acidocaldarius (strain ATCC 33909 / DSM 639 / JCM 8929 / NBRC 15157 / NCIMB 11770).